Reading from the N-terminus, the 337-residue chain is Inositol 2-dehydrogenase (337 aa).

This sequence belongs to the Gfo/Idh/MocA family. As to quaternary structure, homotetramer.

It carries out the reaction myo-inositol + NAD(+) = scyllo-inosose + NADH + H(+). In terms of biological role, involved in the oxidation of myo-inositol (MI) to 2-keto-myo-inositol (2KMI or 2-inosose). This Burkholderia lata (strain ATCC 17760 / DSM 23089 / LMG 22485 / NCIMB 9086 / R18194 / 383) protein is Inositol 2-dehydrogenase.